The following is a 479-amino-acid chain: Aspartyl/glutamyl-tRNA(Asn/Gln) amidotransferase subunit B (479 aa).

This sequence belongs to the GatB/GatE family. GatB subfamily. As to quaternary structure, heterotrimer of A, B and C subunits.

The enzyme catalyses L-glutamyl-tRNA(Gln) + L-glutamine + ATP + H2O = L-glutaminyl-tRNA(Gln) + L-glutamate + ADP + phosphate + H(+). It carries out the reaction L-aspartyl-tRNA(Asn) + L-glutamine + ATP + H2O = L-asparaginyl-tRNA(Asn) + L-glutamate + ADP + phosphate + 2 H(+). In terms of biological role, allows the formation of correctly charged Asn-tRNA(Asn) or Gln-tRNA(Gln) through the transamidation of misacylated Asp-tRNA(Asn) or Glu-tRNA(Gln) in organisms which lack either or both of asparaginyl-tRNA or glutaminyl-tRNA synthetases. The reaction takes place in the presence of glutamine and ATP through an activated phospho-Asp-tRNA(Asn) or phospho-Glu-tRNA(Gln). The polypeptide is Aspartyl/glutamyl-tRNA(Asn/Gln) amidotransferase subunit B (Halorhodospira halophila (strain DSM 244 / SL1) (Ectothiorhodospira halophila (strain DSM 244 / SL1))).